The chain runs to 138 residues: MRTLWITAVLLVGVEGHLLQFRKMIKKMTGKEPIVSYAFYGCYCGKGGRGKPKDATDRCCFVHDCCYGKVTGCDPKWDYYTYSSENGDIVCEGDNPCTKEVCECDKAAAICFRDNLKTYKKRYMTFPDIFCTDPTEKC.

A signal peptide spans 1–16 (MRTLWITAVLLVGVEG). Disulfide bonds link C42–C131, C44–C60, C59–C111, C65–C138, C66–C104, C73–C97, and C91–C102. Ca(2+) contacts are provided by Y43, G45, and G47. The active site involves H63. A Ca(2+)-binding site is contributed by D64. Residue D105 is part of the active site.

It belongs to the phospholipase A2 family. Group II subfamily. D49 sub-subfamily. It depends on Ca(2+) as a cofactor. In terms of tissue distribution, expressed by the venom gland.

It is found in the secreted. The enzyme catalyses a 1,2-diacyl-sn-glycero-3-phosphocholine + H2O = a 1-acyl-sn-glycero-3-phosphocholine + a fatty acid + H(+). Its function is as follows. PLA2 catalyzes the calcium-dependent hydrolysis of the 2-acyl groups in 3-sn-phosphoglycerides. This chain is Basic phospholipase A2 PLA-B', found in Protobothrops flavoviridis (Habu).